The primary structure comprises 486 residues: Ribosomal RNA small subunit methyltransferase F (486 aa).

Residues 122–128, Glu146, Asp173, and Asp191 contribute to the S-adenosyl-L-methionine site; that span reads ASAPGSK. The active-site Nucleophile is Cys244.

This sequence belongs to the class I-like SAM-binding methyltransferase superfamily. RsmB/NOP family.

The protein localises to the cytoplasm. The enzyme catalyses cytidine(1407) in 16S rRNA + S-adenosyl-L-methionine = 5-methylcytidine(1407) in 16S rRNA + S-adenosyl-L-homocysteine + H(+). Functionally, specifically methylates the cytosine at position 1407 (m5C1407) of 16S rRNA. This is Ribosomal RNA small subunit methyltransferase F from Shewanella loihica (strain ATCC BAA-1088 / PV-4).